Consider the following 458-residue polypeptide: Delta(8)-fatty-acid desaturase (458 aa).

The 85-residue stretch at 16 to 100 folds into the Cytochrome b5 heme-binding domain; that stretch reads KKYITSKELK…LKDYQVSDIS (85 aa). The heme site is built by His51 and His74. Transmembrane regions (helical) follow at residues 122–142 and 147–167; these read GVIYSLCFVSLLLSACVYGVL and FWIHMLSGAILGLAWMQIAYL. Residues 169-173 carry the Histidine box-1 motif; it reads HDAGH. The chain crosses the membrane as a helical span at residues 185–205; the sequence is FAGIFIGNCITGISIAWWKWT. A Histidine box-2 motif is present at residues 206 to 210; the sequence is HNAHH. Helical transmembrane passes span 264–284, 293–313, and 320–340; these read YYPIMCVARVNLYLQTILLLI, GLNILGTLIFWTWFPLLVSRL, and VAFVLVSFCVTGIQHIQFTLN. A Histidine box-3 motif is present at residues 383-387; sequence QLEHH.

This sequence belongs to the fatty acid desaturase type 1 family. Fe cation serves as cofactor.

The protein localises to the membrane. It carries out the reaction an N-acyl-(4R)-4-hydroxysphinganine + 2 Fe(II)-[cytochrome b5] + O2 + 2 H(+) = a (4R,8E)-4-hydroxysphingenine ceramide + 2 Fe(III)-[cytochrome b5] + 2 H2O. The catalysed reaction is an N-acyl-(4R)-4-hydroxysphinganine + 2 Fe(II)-[cytochrome b5] + O2 + 2 H(+) = a (4R,8Z)-4-hydroxysphing-8-enine ceramide + 2 Fe(III)-[cytochrome b5] + 2 H2O. Functionally, plays a major role as delta(8)-fatty-acid desaturase which introduces a double bond at the 8-position in the long-chain base (LCB) of ceramides with or without a hydroxy group at the 4-position. The enzyme produces both the 8E and 8Z isomers. This structural modification contributes to the quantitative partitioning of ceramides between the two major sphingolipid classes, glucosylceramides and glycosylinositolphosphoryl ceramides. Sphingolipids are important membrane components involved in environmental stress responses, such as resistance to chilling, and act as cell signaling molecules. This Helianthus annuus (Common sunflower) protein is Delta(8)-fatty-acid desaturase (sld1).